A 611-amino-acid chain; its full sequence is Protein Spindly-A (611 aa).

Residues 1 to 390 are a coiled coil; sequence MEESETVLKL…KENEKIKDEL (390 aa). The segment at 487–611 is disordered; the sequence is TCTAESTDGR…PNATTQCPQQ (125 aa). Positions 493–511 are enriched in basic and acidic residues; the sequence is TDGRIHSKEDLSLSTKEQD. Positions 552–567 are enriched in polar residues; the sequence is HNCSVTSASPRSTSED. Over residues 570–583 the composition is skewed to basic and acidic residues; sequence SESKRFDEEQEKRK. The span at 602 to 611 shows a compositional bias: polar residues; it reads PNATTQCPQQ.

This sequence belongs to the Spindly family.

The protein resides in the chromosome. It localises to the centromere. It is found in the kinetochore. Required for the localization of dynein and dynactin to the mitotic kintochore. Dynein is believed to control the initial lateral interaction between the kinetochore and spindle microtubules and to facilitate the subsequent formation of end-on kinetochore-microtubule attachments mediated by the NDC80 complex. This chain is Protein Spindly-A (spdl1-a), found in Xenopus laevis (African clawed frog).